Consider the following 114-residue polypeptide: PDZK1-interacting protein 1 (114 aa).

At 1 to 28 the chain is on the extracellular side; that stretch reads MSVLSLVVLSLLMALPPASCQQGRGNLQ. The helical transmembrane segment at 29–51 threads the bilayer; it reads PWMQGLIAVAVFLVLVAIAFAVN. Topologically, residues 52-114 are cytoplasmic; it reads HFWCQEKPAP…EEGKVCSTPM (63 aa). S85 is modified (phosphoserine).

It belongs to the PDZK1-interacting protein 1/SMIM24 family. In terms of assembly, forms a heterodimer (via N-terminal transmembrane helix) with SLC5A2/SGLT2 (via TM13); this interaction enhances SLC5A2 transporter activity. Interacts with PDZK1.

It is found in the apical cell membrane. In terms of biological role, auxiliary protein of electrogenic Na(+)-coupled sugar symporter SLC5A2/SGLT2 and SLC5A1/SGLT1. Essential for the transporter activity of SLC5A2/SGLT2 but not SLC5A1/SGLT1. In Bos taurus (Bovine), this protein is PDZK1-interacting protein 1.